Reading from the N-terminus, the 877-residue chain is Protein SEY1 homolog (877 aa).

Residues 1–735 (MVAFAGGART…LRSIEGEKQN (735 aa)) lie on the Cytoplasmic side of the membrane. A GB1/RHD3-type G domain is found at 49 to 307 (GITYHVVGVL…VPLDGIPSYL (259 aa)). Position 59–66 (59–66 (GGQSSGKS)) interacts with GTP. Residues 388 to 410 (RIDIVRKTEAELEEELLKVELKL) are a coiled coil. Residues 736 to 756 (LPAWVLPVLLLLGWNEIWYVL) form a helical membrane-spanning segment. The Lumenal portion of the chain corresponds to 757–759 (SSP). A helical transmembrane segment spans residues 760 to 780 (VLLVVVVIIAAVFLRGFLLTQ). The Cytoplasmic portion of the chain corresponds to 781–877 (WAIFEETGPT…KEEEVPTQKE (97 aa)). Residues 850-877 (PTVLPPSTTSATLTRRLKKEEEVPTQKE) are disordered. Residues 867–877 (KKEEEVPTQKE) show a composition bias toward basic and acidic residues.

Belongs to the TRAFAC class dynamin-like GTPase superfamily. GB1/RHD3 GTPase family. RHD3 subfamily.

It localises to the endoplasmic reticulum membrane. Its function is as follows. Probable GTP-binding protein that may be involved in cell development. The polypeptide is Protein SEY1 homolog (Trypanosoma cruzi (strain CL Brener)).